The following is a 69-amino-acid chain: DNA-directed RNA polymerase subunit epsilon (69 aa).

It belongs to the RNA polymerase subunit epsilon family. As to quaternary structure, RNAP is composed of a core of 2 alpha, a beta and a beta' subunit. The core is associated with a delta subunit, and at least one of epsilon or omega. When a sigma factor is associated with the core the holoenzyme is formed, which can initiate transcription.

The enzyme catalyses RNA(n) + a ribonucleoside 5'-triphosphate = RNA(n+1) + diphosphate. Functionally, a non-essential component of RNA polymerase (RNAP). This Bacillus pumilus (strain SAFR-032) protein is DNA-directed RNA polymerase subunit epsilon.